Reading from the N-terminus, the 112-residue chain is Gonad-inhibiting hormone (112 aa).

The signal sequence occupies residues 1–31 (MVTRVGSGFSVQRVWLLLVIVVVLCGSVTQQ). 3 disulfide bridges follow: C41–C78, C58–C74, and C61–C87. A109 carries the post-translational modification Alanine amide.

As to expression, produced in the eyestalk X-organ sinus gland complex of male and female lobsters.

The protein localises to the secreted. Functionally, inhibits vitellogenesis in female animals. Plays a prominent role in the regulation of reproduction/molting processes. This Homarus americanus (American lobster) protein is Gonad-inhibiting hormone.